The sequence spans 2079 residues: Protein xmas (2079 aa).

In terms of domain architecture, RRM spans K12–N83. The segment at N112–R152 is disordered. Residues D342–Y525 enclose the PCI domain. Positions P835–A1359 are sufficient for Orc3 binding. 4 disordered regions span residues R1335–M1360, A1755–A1778, K1930–A1963, and S2032–L2079. Basic residues predominate over residues H1764–K1776. Residues P2048–V2059 show a composition bias toward low complexity. A compositionally biased stretch (polar residues) spans G2070–L2079.

Belongs to the SAC3 family. In terms of assembly, component of the nuclear pore complex (NPC)-associated TREX-2/AMEX complex (anchoring and mRNA export complex), composed of e(y)2, xmas and PCID2. Within the TREX-2/ AMEX complex, interactions with e(y)2 is required for localization of e(y)2 to the nuclear periphery. Interaction between the TREX-2/AMEX complex and the ORC complex is required for ORC localization to mRNPs, and consequently mRNA export. Within the TREX-2/AMEX-ORC complex, interacts with Orc6, (via C-terminus) with Orc3, and weakly interacts with Orc4. However, another report found that the interaction with Orc3 is not direct, instead it is mediated via e(y)2. Interacts with piwi. Expressed in ovaries (at protein level). As to expression, detected in the testes and ovaries, with expression levels higher in oocytes than in testicular cells (at protein level). In terms of tissue distribution, detected in the testes and ovaries (at protein level). Detected in the testes.

Its subcellular location is the nucleus. The protein resides in the nucleoplasm. The protein localises to the nucleus membrane. It localises to the cytoplasm. In terms of biological role, involved in mRNA export and mRNA coupled transcription activation. Component of the nuclear pore complex (NPC)-associated TREX-2/AMEX complex (anchoring and mRNA export complex) which functions in docking export-competent ribonucleoprotein particles (mRNPs) to the nuclear entrance of the nuclear pore complex (nuclear basket), thereby enabling the export of mRNAs to the cytoplasm through the nuclear pores. The TREX-2/AMEX complex also functions with the transcriptional coactivator SAGA/TFTC complex, to anchor a subset of transcription sites to the nuclear pore complex basket in order to achieve efficient transcription and export of their resulting mRNAs. Within the complex, required for localization of e(y)2 to the nuclear periphery. This Drosophila melanogaster (Fruit fly) protein is Protein xmas.